We begin with the raw amino-acid sequence, 201 residues long: Flavin prenyltransferase UbiX (201 aa).

Residues Gly-23–Ser-25, Ser-49, Ser-103–Thr-106, and Arg-138 contribute to the FMN site. Residues Tyr-168 and Lys-184 each coordinate dimethylallyl phosphate.

The protein belongs to the UbiX/PAD1 family.

The enzyme catalyses dimethylallyl phosphate + FMNH2 = prenylated FMNH2 + phosphate. Its function is as follows. Flavin prenyltransferase that catalyzes the synthesis of the prenylated FMN cofactor (prenyl-FMN) for 4-hydroxy-3-polyprenylbenzoic acid decarboxylase UbiD. The prenyltransferase is metal-independent and links a dimethylallyl moiety from dimethylallyl monophosphate (DMAP) to the flavin N5 and C6 atoms of FMN. The polypeptide is Flavin prenyltransferase UbiX (Saccharolobus solfataricus (strain ATCC 35092 / DSM 1617 / JCM 11322 / P2) (Sulfolobus solfataricus)).